The sequence spans 372 residues: Rab9 effector protein with kelch motifs (372 aa).

Kelch repeat units lie at residues 49–95 (KVFI…FLPS), 100–146 (SIWV…TSSA), 151–203 (HLYV…AAGT), 204–250 (KLFI…AAVA), and 254–303 (HVYV…VIPW). A disordered region spans residues 321-342 (LQDEKGDAAEKPETRSGGSREE). Residues 322 to 342 (QDEKGDAAEKPETRSGGSREE) are compositionally biased toward basic and acidic residues. Residues 349–372 (LCFVFGGMNTEGEIYDDCLVTVVD) form a Kelch 6 repeat.

As to quaternary structure, interacts with PIKFYVE; the interaction recruits RABEPK to the endosomal membrane. Interacts with RAB9 in its GTP-bound conformation. In terms of processing, phosphorylated on Ser residues by PIKFYVE.

Its subcellular location is the cytoplasm. It is found in the endosome membrane. Functionally, rab9 effector required for endosome to trans-Golgi network (TGN) transport. This chain is Rab9 effector protein with kelch motifs (Rabepk), found in Rattus norvegicus (Rat).